The following is a 334-amino-acid chain: Formamidase (334 aa).

A CN hydrolase domain is found at 14–260 (FLVAAIQFPV…WEIVTGEIYP (247 aa)). Glutamate 60 acts as the Proton acceptor in catalysis. Lysine 133 serves as the catalytic Proton donor. Cysteine 166 functions as the Nucleophile in the catalytic mechanism.

Belongs to the carbon-nitrogen hydrolase superfamily. Aliphatic amidase family. As to quaternary structure, homotetramer.

The enzyme catalyses formamide + H2O = formate + NH4(+). With respect to regulation, inhibited by iodoacetate. Appears to be regulated by the fur protein, but this effect is not mediated at the transcriptional level. Functionally, is an aliphatic amidase with a restricted substrate specificity, as it only hydrolyzes formamide. Probably involved in the nitrogen metabolism of H.pylori. In Helicobacter pylori (strain ATCC 700392 / 26695) (Campylobacter pylori), this protein is Formamidase (amiF).